The primary structure comprises 506 residues: Histidine--tRNA ligase (506 aa).

Belongs to the class-II aminoacyl-tRNA synthetase family. As to quaternary structure, homodimer.

Its subcellular location is the cytoplasm. The enzyme catalyses tRNA(His) + L-histidine + ATP = L-histidyl-tRNA(His) + AMP + diphosphate + H(+). The polypeptide is Histidine--tRNA ligase (hisS) (Bradyrhizobium diazoefficiens (strain JCM 10833 / BCRC 13528 / IAM 13628 / NBRC 14792 / USDA 110)).